Consider the following 139-residue polypeptide: NADPH-dependent 7-cyano-7-deazaguanine reductase (139 aa).

The active-site Thioimide intermediate is Cys-34. Asp-41 functions as the Proton donor in the catalytic mechanism. Residues 56–58 and 75–76 contribute to the substrate site; these read VEL and HE.

The protein belongs to the GTP cyclohydrolase I family. QueF type 1 subfamily.

The protein resides in the cytoplasm. It carries out the reaction 7-aminomethyl-7-carbaguanine + 2 NADP(+) = 7-cyano-7-deazaguanine + 2 NADPH + 3 H(+). Its pathway is tRNA modification; tRNA-queuosine biosynthesis. Functionally, catalyzes the NADPH-dependent reduction of 7-cyano-7-deazaguanine (preQ0) to 7-aminomethyl-7-deazaguanine (preQ1). The polypeptide is NADPH-dependent 7-cyano-7-deazaguanine reductase (Nitrosospira multiformis (strain ATCC 25196 / NCIMB 11849 / C 71)).